We begin with the raw amino-acid sequence, 379 residues long: ATP-sensitive inward rectifier potassium channel 10 (379 aa).

The Cytoplasmic portion of the chain corresponds to Met-1–Asp-61. Arg-36 is a 1,2-dioctanoyl-sn-glycero-3-phospho-(1D-myo-inositol-4,5-bisphosphate) binding site. The helical transmembrane segment at Met-62–Leu-88 threads the bilayer. The Extracellular portion of the chain corresponds to Val-89–Thr-114. The cysteines at positions 108 and 140 are disulfide-linked. Residues Leu-115–Tyr-131 constitute an intramembrane region (discontinuously helical; Pore-forming). A Selectivity filter motif is present at residues Thr-128–Phe-133. Topologically, residues Gly-132–Cys-140 are extracellular. Residues Pro-141–Leu-166 traverse the membrane as a helical segment. At Ala-167–Val-379 the chain is on the cytoplasmic side. Residues Lys-168, Arg-171, and Lys-173 each coordinate 1,2-dioctanoyl-sn-glycero-3-phospho-(1D-myo-inositol-4,5-bisphosphate). Gly-210–Leu-217 contributes to the ATP binding site.

It belongs to the inward rectifier-type potassium channel (TC 1.A.2.1) family. KCNJ10 subfamily. As to quaternary structure, homotetramer. In kidney cells, it forms heteromeric channels with Kir5.1/KCNJ16; this interaction is required for KCNJ16 localization to the basolateral membrane. Interacts with MAGI1, alone and possibly as a heteromer with KCNJ16; this interaction may facilitate KCNJ10/KCNJ16 potassium channel expression at the basolateral membrane in kidney cells. Interacts with PATJ. As to expression, widely expressed in adult brain, including in the neocortex, the stratum pyrimadale of the hippocampus and the piriform cortex. Expressed by cultured astrocytes and also by cocultured cortical neurons (at protein level). In the distal segment of the nephron, expressed in the distal convoluted tubule, the connecting tubule, and the early cortical collecting duct.

Its subcellular location is the membrane. It is found in the basolateral cell membrane. The enzyme catalyses K(+)(in) = K(+)(out). Its activity is regulated as follows. Channel activity is strongly regulated by variations of cytosolic pH; channels are activated by alkaline and inhibited by acidic pH values. Activated by phosphatidylinositol 4,5 biphosphate (PtdIns(4,5)P2). Inhibited by Ba(2+) and Cs(+). May be responsible for potassium buffering action of glial cells in the brain. Inward rectifier potassium channels are characterized by a greater tendency to allow potassium to flow into the cell rather than out of it. Their voltage dependence is regulated by the concentration of extracellular potassium; as external potassium is raised, the voltage range of the channel opening shifts to more positive voltages. The inward rectification is mainly due to the blockage of outward current by internal magnesium. Can be blocked by extracellular barium and cesium. In the kidney, together with KCNJ16, mediates basolateral K(+) recycling in distal tubules; this process is critical for Na(+) reabsorption at the tubules. The polypeptide is ATP-sensitive inward rectifier potassium channel 10 (Mus musculus (Mouse)).